Consider the following 355-residue polypeptide: MAPELSSPSSSPRYTVGYALLPEKVSSVVRPSLVALAADRGVRLVAVDVSRPLAEQGPFDLLVHKMYDRGWRAQLEELAARHPGVPVVVDSPGAIDRLLDRATMLDVVSGLRTPVSVPPQVVVSDAAADADELLARAALRFPLIAKPLAVDGSAESHDMRLVYRRDGVLPLLRAPLVLQEFVNHGGVLFKVYVVGDRATCVRRSSLPDVPARRLLDLDAEPSVPFANISNQPLPPPDDDGGAADDDTPAAGFVDEVARGLRRGLGLHLFNFDMIRERSEEHGDRYFIIDINYFPGYAKMPGYEAALTDFFLEMLRGTRPVPEQLGPGSGLDMEARKLEPGLGIGLRELESGRAQA.

Lys65 lines the 1D-myo-inositol 1,3,4-trisphosphate pocket. 2 residues coordinate ATP: Arg101 and Lys146. The ATP-grasp domain maps to Val107 to Arg318. 2 residues coordinate 1D-myo-inositol 1,3,4-trisphosphate: His157 and Lys190. Residues Gln179–Lys190 and Ser205 each bind ATP. Residues Phe225–Pro248 are disordered. Residues Pro236 to Thr247 are compositionally biased toward acidic residues. 3 residues coordinate Mg(2+): Asp272, Asp289, and Asn291. Residue Asn291 coordinates 1D-myo-inositol 1,3,4-trisphosphate.

This sequence belongs to the ITPK1 family. Monomer. Requires Mg(2+) as cofactor.

It carries out the reaction 1D-myo-inositol 3,4,5,6-tetrakisphosphate + ATP = 1D-myo-inositol 1,3,4,5,6-pentakisphosphate + ADP + H(+). The catalysed reaction is 1D-myo-inositol 1,3,4-trisphosphate + ATP = 1D-myo-inositol 1,3,4,5-tetrakisphosphate + ADP + H(+). The enzyme catalyses 1D-myo-inositol 1,3,4-trisphosphate + ATP = 1D-myo-inositol 1,3,4,6-tetrakisphosphate + ADP + H(+). Functionally, kinase that can phosphorylate various inositol polyphosphate such as Ins(3,4,5,6)P4 or Ins(1,3,4)P3 and participates in phytic acid biosynthesis in developing seeds. Phytic acid is the primary storage form of phosphorus in cereal grains and other plant seeds. This chain is Inositol-tetrakisphosphate 1-kinase 4 (ITPK4), found in Oryza sativa subsp. indica (Rice).